Reading from the N-terminus, the 145-residue chain is Large ribosomal subunit protein bL17 (145 aa).

Belongs to the bacterial ribosomal protein bL17 family. In terms of assembly, part of the 50S ribosomal subunit. Contacts protein L32.

In Orientia tsutsugamushi (strain Ikeda) (Rickettsia tsutsugamushi), this protein is Large ribosomal subunit protein bL17.